We begin with the raw amino-acid sequence, 404 residues long: RNA exonuclease 3 (404 aa).

Polar residues predominate over residues 1–17; the sequence is MNNNAQNKRSLDDSNGN. The tract at residues 1–29 is disordered; the sequence is MNNNAQNKRSLDDSNGNDTKRPKQEDPKY. Over residues 18-28 the composition is skewed to basic and acidic residues; it reads DTKRPKQEDPK. The Exonuclease domain maps to 241–389; the sequence is VLGIDCEMGF…EDSIAAIDIV (149 aa).

This sequence belongs to the REXO1/REXO3 family.

Its subcellular location is the cytoplasm. It localises to the nucleus. In terms of biological role, 3' to 5' exoribonuclease required for proper 3' end maturation of MRP RNA and of the U5L snRNA. The protein is RNA exonuclease 3 (REX3) of Candida albicans (strain SC5314 / ATCC MYA-2876) (Yeast).